We begin with the raw amino-acid sequence, 1104 residues long: Transient receptor potential cation channel subfamily M member 8 (1104 aa).

Residues 1–733 lie on the Cytoplasmic side of the membrane; that stretch reads MSFEGARLSM…LWYYVAFFTS (733 aa). A helical membrane pass occupies residues 734-758; it reads PFVVFSWNVVFYIAFLLLFAYVLLM. Residues 759–765 are Extracellular-facing; it reads DFHSVPH. A helical transmembrane segment spans residues 766–789; the sequence is TPELILYALVFVLFCDEVRQWYMN. The Ca(2+) site is built by Glu-782 and Gln-785. Residues 790 to 796 lie on the Cytoplasmic side of the membrane; sequence GVNYFTD. Residues 797 to 817 traverse the membrane as a helical segment; the sequence is LWNVMDTLGLFYFIAGIVFRL. Ca(2+) contacts are provided by Asn-799 and Asp-802. Over 818–822 the chain is Extracellular; sequence HSSNK. Residues 823 to 848 traverse the membrane as a helical segment; sequence SSLYSGRVIFCLDYIIFTLRLIHIFT. Residues 849-853 lie on the Cytoplasmic side of the membrane; that stretch reads VSRNL. A helical transmembrane segment spans residues 854-890; the sequence is GPKIIMLQRMLIDVFFFLFLFAVWMVAFGVARQGILR. Over 891-895 the chain is Extracellular; sequence QNEQR. Positions 896–912 form an intramembrane region, pore-forming; it reads WRWIFRSVIYEPYLAMF. Topologically, residues 913-953 are extracellular; it reads GQVPSDVDSTTYDFSHCTFSGNESKPLCVELDEYNLPRFPE. A helical membrane pass occupies residues 954–984; the sequence is WITIPLVCIYMLSTNILLVNLLVAMFGYTVG. Residues 985-1104 lie on the Cytoplasmic side of the membrane; the sequence is IVQENNDQVW…LLKEIANKIK (120 aa). Residues 1067-1104 adopt a coiled-coil conformation; that stretch reads INTKANDNAEEMRHRFRQLDTKLNDLKGLLKEIANKIK.

It belongs to the transient receptor (TC 1.A.4) family. LTrpC subfamily. TRPM8 sub-subfamily. In terms of assembly, homotetramer. Interacts (via N-terminus and C-terminus domains) with TCAF1; the interaction stimulates TRPM8 channel activity. Interacts (via N-terminus and C-terminus domains) with TCAF2; the interaction inhibits TRPM8 channel activity. Expressed in dorsal root and trigeminal ganglia. Specifically expressed in a subset of sensory neurons, including cold-sensitive neurons in trigeminal neurons.

It is found in the cell membrane. It localises to the membrane raft. It carries out the reaction Ca(2+)(in) = Ca(2+)(out). The enzyme catalyses Na(+)(in) = Na(+)(out). It catalyses the reaction K(+)(in) = K(+)(out). With respect to regulation, activated by cold temperatures and by both natural and synthetic cooling compounds such as menthol and icilin. Activation of the channel requires the presence of PI(4,5)P2; PI(4,5)P2 is necessary to gate the channel. Activated by intracellular Ca(2+). In terms of biological role, non-selective ion channel permeable to monovalent and divalent cations, including Na(+), K(+), and Ca(2+), with higher permeability for Ca(2+). Activated by multiple factors, such as temperature, voltage, pressure, and changes in osmolality. Activated by cool temperatures (&lt;23-28 degrees Celsius) and by chemical ligands evoking a sensation of coolness, such as menthol and icilin, therefore plays a central role in the detection of environmental cold temperatures. TRPM8 is a voltage-dependent channel; its activation by cold or chemical ligands shifts its voltage thresholds towards physiological membrane potentials, leading to the opening of the channel. In addition to its critical role in temperature sensing, regulates basal tear secretion by sensing evaporation-induced cooling and changes in osmolality. The chain is Transient receptor potential cation channel subfamily M member 8 (Trpm8) from Rattus norvegicus (Rat).